Reading from the N-terminus, the 194-residue chain is Probable proteasome subunit beta type-4 (194 aa).

The protein belongs to the peptidase T1B family. In terms of assembly, the 26S proteasome consists of a 20S proteasome core and two 19S regulatory subunits. The 20S proteasome core is composed of 28 subunits that are arranged in four stacked rings, resulting in a barrel-shaped structure. The two end rings are each formed by seven alpha subunits, and the two central rings are each formed by seven beta subunits. The catalytic chamber with the active sites is on the inside of the barrel.

Its subcellular location is the cytoplasm. It is found in the nucleus. Functionally, non-catalytic component of the proteasome, a multicatalytic proteinase complex which is characterized by its ability to cleave peptides with Arg, Phe, Tyr, Leu, and Glu adjacent to the leaving group at neutral or slightly basic pH. The proteasome has an ATP-dependent proteolytic activity. This is Probable proteasome subunit beta type-4 from Schizosaccharomyces pombe (strain 972 / ATCC 24843) (Fission yeast).